The primary structure comprises 101 residues: Small ribosomal subunit protein uS14 (101 aa).

A disordered region spans residues 1–20 (MAKTSAVEKNKRRRKLVANH). Basic residues predominate over residues 10–20 (NKRRRKLVANH).

This sequence belongs to the universal ribosomal protein uS14 family. Part of the 30S ribosomal subunit. Contacts proteins S3 and S10.

Binds 16S rRNA, required for the assembly of 30S particles and may also be responsible for determining the conformation of the 16S rRNA at the A site. This chain is Small ribosomal subunit protein uS14, found in Sinorhizobium medicae (strain WSM419) (Ensifer medicae).